The following is a 388-amino-acid chain: MAFPRTLAILAAAAALVVACSHGGTPTGSSTTSGASPATPVAVPVPRSCAEPAGIPALLSPRDKLAQLLVVGVRDAADAQAVVTNYHVGGILIGSDTDLTIFDGALAEIVAGGGPLPLAVSVDEEGGRLSRLRSLIGGTGPSARELAQTRTVQQVRDLARDRGRQMRKLGITIDFAPVVDVTDAPDDTVIGDRSFGSDPATVTAYAGAYAQGLRDAGVLPVLKHFPGHGRGSGDSHNGGVTTPPLDDLVGDDLVPYRTLVTQAPVGVMVGHLQVPGLTGSEPASLSKAAVNLLRTGTGYGAPPFDGPVFSDDLSGMAAISDRFGVSEAVLRTLQAGADIALWVTTKEVPAVLDRLEQALRAGELPMSAVDRSVVRVATMKGPNPGCGR.

The N-terminal stretch at 1–19 is a signal peptide; the sequence is MAFPRTLAILAAAAALVVA. Residue Cys20 is the site of N-palmitoyl cysteine attachment. Cys20 carries the S-diacylglycerol cysteine lipid modification. Substrate contacts are provided by residues Asp123, Arg131, Arg193, and 223 to 224; that span reads KH. His236 acts as the Proton donor/acceptor in catalysis. Residue Asp311 is the Nucleophile of the active site.

This sequence belongs to the glycosyl hydrolase 3 family.

Its subcellular location is the cell inner membrane. The enzyme catalyses Hydrolysis of terminal non-reducing N-acetyl-D-hexosamine residues in N-acetyl-beta-D-hexosaminides.. The protein operates within cell wall biogenesis; peptidoglycan recycling. Functionally, plays a role in peptidoglycan recycling by cleaving the terminal beta-1,4-linked N-acetylglucosamine (GlcNAc) from peptidoglycan fragments. Acts as a regulator for GlcNAc-MurNAc levels by cleaving disaccharides and allowing the breakdown of MurNAc. This chain is Beta-hexosaminidase LpqI, found in Mycobacterium bovis (strain BCG / Pasteur 1173P2).